A 79-amino-acid chain; its full sequence is Major outer membrane lipoprotein Lpp 2 (79 aa).

The signal sequence occupies residues 1–21 (MNRTNKLILGAVVLGSTLLAG). Residue Cys-22 is the site of N-palmitoyl cysteine attachment. Residue Cys-22 is the site of S-diacylglycerol cysteine attachment. 2 repeats span residues 25-35 (NAKIDQLSSDV) and 39-49 (SAKVDQLSNDV). Residues 28 to 69 (IDQLSSDVQTLSAKVDQLSNDVNAMRSDVQAAKDDAARANQR) are a coiled coil. Lys-79 carries the post-translational modification N6-murein peptidoglycan lysine.

The protein belongs to the Lpp family. In terms of assembly, homotrimer.

It localises to the cell outer membrane. The protein resides in the secreted. The protein localises to the cell wall. In terms of biological role, a highly abundant outer membrane lipoprotein that controls the distance between the inner and outer membranes. The only protein known to be covalently linked to the peptidoglycan network (PGN). Also non-covalently binds the PGN. The link between the cell outer membrane and PGN contributes to maintenance of the structural and functional integrity of the cell envelope, and maintains the correct distance between the PGN and the outer membrane. This chain is Major outer membrane lipoprotein Lpp 2, found in Salmonella typhi.